The chain runs to 462 residues: Retinoic acid receptor alpha (462 aa).

Residues methionine 1–proline 87 are modulating. The span at glycine 52–glutamine 64 shows a compositional bias: polar residues. The tract at residues glycine 52 to serine 77 is disordered. Serine 77 is subject to Phosphoserine; by CDK7. 2 NR C4-type zinc fingers span residues cysteine 88 to cysteine 108 and cysteine 124 to cysteine 148. The nuclear receptor DNA-binding region spans cysteine 88–methionine 153. Serine 96 is modified (phosphoserine; by PKB/AKT1). The interval serine 154–proline 182 is hinge. Glycyl lysine isopeptide (Lys-Gly) (interchain with G-Cter in SUMO) cross-links involve residues lysine 166 and lysine 171. One can recognise an NR LBD domain in the interval glutamate 183–serine 417. Serine 219 carries the phosphoserine; by PKA modification. Cysteine 235 serves as a coordination point for all-trans-retinoate. The short motif at isoleucine 254–isoleucine 258 is the UBR5-degron element. Serine 287 contributes to the all-trans-retinoate binding site. Residue lysine 347 is modified to N6,N6,N6-trimethyllysine. Position 369 is a phosphoserine; by PKA and RPS6KA5 (serine 369). Lysine 399 participates in a covalent cross-link: Glycyl lysine isopeptide (Lys-Gly) (interchain with G-Cter in SUMO). The tract at residues glycine 404–glycine 419 is required for binding corepressor NCOR1. Residues proline 408–asparagine 416 carry the 9aaTAD motif. A disordered region spans residues leucine 420–proline 462. The segment covering glutamine 426 to leucine 437 has biased composition (gly residues). The span at cysteine 444 to proline 462 shows a compositional bias: low complexity.

The protein belongs to the nuclear hormone receptor family. NR1 subfamily. In terms of assembly, heterodimer; with RXRA. Binds DNA preferentially as a heterodimer. RXRA serves as enhancer to induce RARA binding to RARE. Interacts with RXRG. Interacts with NCOA3 and NCOA6 coactivators, leading to a strong increase of transcription of target genes. Interacts with NCOA7; the interaction requires ligand-binding. Interacts (via the ligand-binding domain) with PRAME; interaction is direct and ligand (retinoic acid)-dependent. Interacts with PRKAR1A; the interaction negatively regulates RARA transcriptional activity. Interacts with NCOR1; the interaction occurs in the absence of ligand and represses transcriptional activity. Interacts with NCOR2. Interacts with PRMT2. Interacts with LRIF1. Interacts with ASXL1 and NCOA1. Interacts with ACTN4. Interacts with CDK7; the interaction is enhanced by interaction with GTF2H3. Interacts with GTF2H3; the interaction requires prior phosphorylation on Ser-369 which then enhances interaction with CDK7. In a complex with HDAC3, HDAC5 and HDAC7; the HDACs serve as corepressors of RARA, causing its deacetylation and inhibition of RARE DNA element binding; association with HDAC3, HDAC5 and HDAC7 is increased upon oscillatory shear stress. In the absence of hormonal ligand, interacts with TACC1. In terms of processing, phosphorylated on serine and threonine residues. Phosphorylation does not change during cell cycle. Phosphorylation on Ser-77 is crucial for the N-terminal AF1 transcriptional activity. Under stress conditions, MAPK8 enhances phosphorylation on Thr-181, Ser-445 and Ser-461 leading to RARA ubiquitination and degradation. Phosphorylation by AKT1 inhibits the transactivation activity. On retinoic acid stimulation, phosphorylation on Ser-369 by RPS6KA5 promotes interaction with GTF2H3 and the CDK7-mediated phosphorylation of Ser-77. Ubiquitinated by UBR5, leading to its degradation: UBR5 specifically recognizes and binds ligand-bound RARA when it is not associated with coactivators (NCOAs). In presence of NCOAs, the UBR5-degron is not accessible, preventing its ubiquitination and degradation. Post-translationally, sumoylated with SUMO2, mainly on Lys-399 which is also required for SENP6 binding. On all-trans retinoic acid (ATRA) binding, a conformational change may occur that allows sumoylation on two additional site, Lys-166 and Lys-171. Probably desumoylated by SENP6. Sumoylation levels determine nuclear localization and regulate ATRA-mediated transcriptional activity. In terms of processing, acetylated; acetylation is increased upon pulsatile shear stress and decreased upon oscillatory shear stress. In terms of tissue distribution, expressed in Sertoli cells and germ cells.

The protein localises to the nucleus. It localises to the cytoplasm. In terms of biological role, receptor for retinoic acid. Retinoic acid receptors bind as heterodimers to their target response elements in response to their ligands, all-trans or 9-cis retinoic acid, and regulate gene expression in various biological processes. The RXR/RAR heterodimers bind to the retinoic acid response elements (RARE) composed of tandem 5'-AGGTCA-3' sites known as DR1-DR5. In the absence of ligand, the RXR-RAR heterodimers associate with a multiprotein complex containing transcription corepressors that induce histone deacetylation, chromatin condensation and transcriptional suppression. On ligand binding, the corepressors dissociate from the receptors and associate with the coactivators leading to transcriptional activation. Formation of heterocomplex with histone deacetylases might lead to inhibition of RARE DNA element binding and to transcriptional repression. Transcriptional activation and RARE DNA element binding might be supported by the transcription factor KLF2. RARA plays an essential role in the regulation of retinoic acid-induced germ cell development during spermatogenesis. Has a role in the survival of early spermatocytes at the beginning prophase of meiosis. In Sertoli cells, may promote the survival and development of early meiotic prophase spermatocytes. In concert with RARG, required for skeletal growth, matrix homeostasis and growth plate function. Together with RXRA, positively regulates microRNA-10a expression, thereby inhibiting the GATA6/VCAM1 signaling response to pulsatile shear stress in vascular endothelial cells. In association with HDAC3, HDAC5 and HDAC7 corepressors, plays a role in the repression of microRNA-10a and thereby promotes the inflammatory response. In Mus musculus (Mouse), this protein is Retinoic acid receptor alpha (Rara).